A 414-amino-acid polypeptide reads, in one-letter code: 3-phosphoshikimate 1-carboxyvinyltransferase (414 aa).

Positions 20, 21, and 25 each coordinate 3-phosphoshikimate. A phosphoenolpyruvate-binding site is contributed by Lys-20. Phosphoenolpyruvate is bound by residues Gly-88 and Arg-116. 3-phosphoshikimate is bound by residues Thr-157, Ser-158, Gln-159, Ser-183, Asp-297, and Lys-324. Gln-159 serves as a coordination point for phosphoenolpyruvate. The Proton acceptor role is filled by Asp-297. Phosphoenolpyruvate contacts are provided by Arg-328, Arg-369, and Lys-395.

Belongs to the EPSP synthase family. As to quaternary structure, monomer.

Its subcellular location is the cytoplasm. It carries out the reaction 3-phosphoshikimate + phosphoenolpyruvate = 5-O-(1-carboxyvinyl)-3-phosphoshikimate + phosphate. The protein operates within metabolic intermediate biosynthesis; chorismate biosynthesis. In terms of biological role, catalyzes the transfer of the enolpyruvyl moiety of phosphoenolpyruvate (PEP) to the 5-hydroxyl of shikimate-3-phosphate (S3P) to produce enolpyruvyl shikimate-3-phosphate and inorganic phosphate. This is 3-phosphoshikimate 1-carboxyvinyltransferase from Caldivirga maquilingensis (strain ATCC 700844 / DSM 13496 / JCM 10307 / IC-167).